Reading from the N-terminus, the 313-residue chain is Porphobilinogen deaminase (313 aa).

Cys-241 is modified (S-(dipyrrolylmethanemethyl)cysteine).

Belongs to the HMBS family. As to quaternary structure, monomer. It depends on dipyrromethane as a cofactor.

The enzyme catalyses 4 porphobilinogen + H2O = hydroxymethylbilane + 4 NH4(+). It functions in the pathway porphyrin-containing compound metabolism; protoporphyrin-IX biosynthesis; coproporphyrinogen-III from 5-aminolevulinate: step 2/4. It participates in porphyrin-containing compound metabolism; chlorophyll biosynthesis. Its function is as follows. Tetrapolymerization of the monopyrrole PBG into the hydroxymethylbilane pre-uroporphyrinogen in several discrete steps. This chain is Porphobilinogen deaminase, found in Chlorobium limicola (strain DSM 245 / NBRC 103803 / 6330).